The chain runs to 710 residues: MSAQGDCEFLVKRARELVPGDLWAAKAWLITARSLYPADFNIQYEMYTIERNAERTASAGRLLYDMFVNFPDQPAVWREISVITAALRNDSQDKQTQFLRGLFETLPGRVQCEMLLKATEQCFNTLERAEMLLLLLRRFPETVVQHGVGLGETLLEAENIEDQESPVNCFRKLFVCDVLPLIINNPDVRLPASLLYKYLNKAAEFYINYVTRSTQTESQYQGSQDSSDLMSPSKRSSQKYIIDGLTEKSSQITDPWERLFKILSVVGMRCEWQMDKGRRSFGDILHRMKDLCRYISNFDSDAHAKYKNQVVYSTMLVFFKNAFQYVSNIQPSLFQGPNAPNQAPLILLEDVTNVYGDTDIDRNKHIHKKRKLAEGREKTMSSDDEDPSGKARSRHIAVNKADLANSIEVLESFKLARESWELLCSLESLDKEFTRICLSWKTETWLWLRIFLTDMIIYQGQYKKAISSLHHLAALQGSHSPQQITGQGSLENQRALIQLATCHFALGEYRQTCEKVLDLMCYILLPIQEGGKVQEEQPKVKSKFRKGSDLKLWPCTSRAIMPYCLHLLLACFKLRAFTDNRDDTALGHVIVLLQHEWPRGENLFLKAINKICQQGNFQYENFFNYVTNIDMLEEFAYLRTQEGGKIHLELLPNQGMLIKHHTVTRGITKGVKEDFRLAMERQVSRCGENLMVVLHRFCINEKILLLQTLS.

Positions 366 to 393 are disordered; it reads IHKKRKLAEGREKTMSSDDEDPSGKARS. The segment covering 372–381 has biased composition (basic and acidic residues); sequence LAEGREKTMS.

The protein belongs to the Integrator subunit 10 family. As to quaternary structure, component of the Integrator complex, composed of core subunits INTS1, INTS2, INTS3, INTS4, INTS5, INTS6, INTS7, INTS8, INTS9/RC74, INTS10, INTS11/CPSF3L, INTS12, INTS13, INTS14 and INTS15. The core complex associates with protein phosphatase 2A subunits PPP2CA and PPP2R1A, to form the Integrator-PP2A (INTAC) complex. INTS10 is part of the tail subcomplex, composed of INTS10, INTS13, INTS14 and INTS15.

It localises to the nucleus. Its function is as follows. Component of the integrator complex, a multiprotein complex that terminates RNA polymerase II (Pol II) transcription in the promoter-proximal region of genes. The integrator complex provides a quality checkpoint during transcription elongation by driving premature transcription termination of transcripts that are unfavorably configured for transcriptional elongation: the complex terminates transcription by (1) catalyzing dephosphorylation of the C-terminal domain (CTD) of Pol II subunit POLR2A/RPB1 and SUPT5H/SPT5, (2) degrading the exiting nascent RNA transcript via endonuclease activity and (3) promoting the release of Pol II from bound DNA. The integrator complex is also involved in terminating the synthesis of non-coding Pol II transcripts, such as enhancer RNAs (eRNAs), small nuclear RNAs (snRNAs), telomerase RNAs and long non-coding RNAs (lncRNAs). The polypeptide is Integrator complex subunit 10 (INTS10) (Gallus gallus (Chicken)).